We begin with the raw amino-acid sequence, 203 residues long: Dephospho-CoA kinase (203 aa).

Residues 6-203 (RLGITGGIAC…SLLGRGGKGG (198 aa)) form the DPCK domain. 14–19 (ACGKSV) lines the ATP pocket.

This sequence belongs to the CoaE family.

Its subcellular location is the cytoplasm. It carries out the reaction 3'-dephospho-CoA + ATP = ADP + CoA + H(+). It functions in the pathway cofactor biosynthesis; coenzyme A biosynthesis; CoA from (R)-pantothenate: step 5/5. Functionally, catalyzes the phosphorylation of the 3'-hydroxyl group of dephosphocoenzyme A to form coenzyme A. This is Dephospho-CoA kinase from Thermosynechococcus vestitus (strain NIES-2133 / IAM M-273 / BP-1).